Reading from the N-terminus, the 196-residue chain is DnaA initiator-associating protein DiaA (196 aa).

In terms of domain architecture, SIS spans 34-196; the sequence is LVQSLLNGNK…DNTLFPHQDD (163 aa).

It belongs to the SIS family. DiaA subfamily. In terms of assembly, homotetramer; dimer of dimers.

Required for the timely initiation of chromosomal replication via direct interactions with the DnaA initiator protein. The protein is DnaA initiator-associating protein DiaA of Cronobacter sakazakii (strain ATCC BAA-894) (Enterobacter sakazakii).